We begin with the raw amino-acid sequence, 678 residues long: PTS system glucose-specific EIICBA component (678 aa).

The 412-residue stretch at 3–414 folds into the PTS EIIC type-1 domain; that stretch reads KKLFGQLQRI…FKYKTPGRED (412 aa). Helical transmembrane passes span 16-36, 63-83, 89-109, 126-146, 170-190, 211-231, 273-293, 303-323, 329-349, 355-375, and 382-402; these read LMLP…GTAM, AGGI…AIGL, VAAI…GAFL, VLGI…GALA, FVPI…AWIW, LAVF…LHHI, FMQG…LAIY, VVAG…ITEP, LFVA…SFLI, VHLG…GVLP, and LVIP…RFLI. Residues 425–506 enclose the PTS EIIB type-1 domain; that stretch reads SELPFNVLKA…SLIMKGEITK (82 aa). The Phosphocysteine intermediate; for EIIB activity role is filled by cysteine 447. In terms of domain architecture, PTS EIIA type-1 spans 547-651; sequence DQVFAQKMMG…STVTPLIITN (105 aa). The Tele-phosphohistidine intermediate; for EIIA activity role is filled by histidine 599.

It is found in the cell membrane. The enzyme catalyses N(pros)-phospho-L-histidyl-[protein] + D-glucose(out) = D-glucose 6-phosphate(in) + L-histidyl-[protein]. In terms of biological role, the phosphoenolpyruvate-dependent sugar phosphotransferase system (sugar PTS), a major carbohydrate active transport system, catalyzes the phosphorylation of incoming sugar substrates concomitantly with their translocation across the cell membrane. This system is involved in glucose transport. This chain is PTS system glucose-specific EIICBA component (ptsG), found in Staphylococcus saprophyticus subsp. saprophyticus (strain ATCC 15305 / DSM 20229 / NCIMB 8711 / NCTC 7292 / S-41).